Consider the following 3112-residue polypeptide: Genome polyprotein (3112 aa).

A Peptidase S30 domain is found at 234-383 (KLTQRRANKI…PDCLEGLTYY (150 aa)). Active-site for P1 proteinase activity residues include His-286, Asp-301, and Ser-333. A Peptidase C6 domain is found at 729-850 (TLVPKSGFCY…IETFKDYRIG (122 aa)). Catalysis depends on for helper component proteinase activity residues Cys-737 and His-809. Residues 1278-1429 (NIATGAGNEF…CVPTNHKVDV (152 aa)) form the Helicase ATP-binding domain. 1291–1298 (GDVGSGKS) serves as a coordination point for ATP. A DECH box motif is present at residues 1379 to 1382 (DECH). The 184-residue stretch at 1444–1627 (SIDSHAEGLR…EVNFVTREQV (184 aa)) folds into the Helicase C-terminal domain. Positions 2096–2311 (DDNYVPHSRC…ISWKGVPTNM (216 aa)) constitute a Peptidase C4 domain. Residues His-2140, Asp-2174, and Cys-2243 each act as for nuclear inclusion protein A activity in the active site. Positions 2569–2687 (WKFIDADGSR…NAPQGVCETI (119 aa)) constitute a RdRp catalytic domain. Residues 2818-2867 (HSGADQSGVVKDQTGDKAEGSGTKTEDPPNQTTDPVNNPSNGGNKDAPQN) form a disordered region. Over residues 2830–2844 (QTGDKAEGSGTKTED) the composition is skewed to basic and acidic residues. Over residues 2845 to 2867 (PPNQTTDPVNNPSNGGNKDAPQN) the composition is skewed to polar residues.

This sequence belongs to the potyviridae genome polyprotein family. In terms of processing, VPg is uridylylated by the polymerase and is covalently attached to the 5'-end of the genomic RNA. This uridylylated form acts as a nucleotide-peptide primer for the polymerase. Post-translationally, genome polyprotein of potyviruses undergoes post-translational proteolytic processing by the main proteinase NIa-pro resulting in the production of at least ten individual proteins. The P1 proteinase and the HC-pro cleave only their respective C-termini autocatalytically. 6K1 is essential for proper proteolytic separation of P3 from CI.

The protein resides in the host cytoplasmic vesicle. It is found in the virion. The enzyme catalyses RNA(n) + a ribonucleoside 5'-triphosphate = RNA(n+1) + diphosphate. It carries out the reaction Hydrolyzes glutaminyl bonds, and activity is further restricted by preferences for the amino acids in P6 - P1' that vary with the species of potyvirus, e.g. Glu-Xaa-Xaa-Tyr-Xaa-Gln-|-(Ser or Gly) for the enzyme from tobacco etch virus. The natural substrate is the viral polyprotein, but other proteins and oligopeptides containing the appropriate consensus sequence are also cleaved.. It catalyses the reaction Hydrolyzes a Gly-|-Gly bond at its own C-terminus, commonly in the sequence -Tyr-Xaa-Val-Gly-|-Gly, in the processing of the potyviral polyprotein.. Required for aphid transmission and also has proteolytic activity. Only cleaves a Gly-Gly dipeptide at its own C-terminus. Interacts with virions and aphid stylets. Acts as a suppressor of RNA-mediated gene silencing, also known as post-transcriptional gene silencing (PTGS), a mechanism of plant viral defense that limits the accumulation of viral RNAs. May have RNA-binding activity. Functionally, has helicase activity. It may be involved in replication. In terms of biological role, indispensable for virus replication. Its function is as follows. Mediates the cap-independent, EIF4E-dependent translation of viral genomic RNAs. Binds to the cap-binding site of host EIF4E and thus interferes with the host EIF4E-dependent mRNA export and translation. VPg-RNA directly binds EIF4E and is a template for transcription. Also forms trimeric complexes with EIF4E-EIF4G, which are templates for translation. Has RNA-binding and proteolytic activities. Functionally, an RNA-dependent RNA polymerase that plays an essential role in the virus replication. In terms of biological role, involved in aphid transmission, cell-to-cell and systemis movement, encapsidation of the viral RNA and in the regulation of viral RNA amplification. The polypeptide is Genome polyprotein (Triticum aestivum (Wheat)).